The primary structure comprises 443 residues: Serine/threonine-protein phosphatase 2A 55 kDa regulatory subunit B beta isoform (443 aa).

4 WD repeats span residues 22–61, 87–128, 171–209, and 220–260; these read TEAD…KNQV, EIEE…KRPE, AHTY…QSFN, and ELTE…LCDR. Ser-275 is subject to Phosphoserine. 3 WD repeats span residues 279–317, 334–375, and 410–442; these read EIIS…RPVE, ENDC…DVTL, and DFSK…QDKV. Residue Tyr-295 is modified to Phosphotyrosine. Phosphothreonine is present on Thr-298.

This sequence belongs to the phosphatase 2A regulatory subunit B family. In terms of assembly, PP2A consists of a common heterodimeric core enzyme, composed of a 36 kDa catalytic subunit (subunit C) and a 65 kDa constant regulatory subunit (PR65 or subunit A), that associates with a variety of regulatory subunits. Proteins that associate with the core dimer include three families of regulatory subunits B (the R2/B/PR55/B55, R3/B''/PR72/PR130/PR59 and R5/B'/B56 families), the 48 kDa variable regulatory subunit, viral proteins, and cell signaling molecules. Interacts with IER5 (via N- and C-terminal regions). Interacts with TOMM22. Expressed in the brain. Isoform 1 and isoform 2 are expressed in the forbrain. Isoform 1 is more strongly expressed than isoform 2 in the olfactory bulb. Isoform 1 and isoform 2 are weakly expressed in the cerebellum. Isoform 1 is expressed in the testis. Isoform 2 expression is undetectable at birth rising to adult level at day 14.

It localises to the cytoplasm. It is found in the cytoskeleton. The protein localises to the membrane. The protein resides in the mitochondrion. Its subcellular location is the mitochondrion outer membrane. Its function is as follows. The B regulatory subunit might modulate substrate selectivity and catalytic activity, and might also direct the localization of the catalytic enzyme to a particular subcellular compartment. Within the PP2A holoenzyme complex, isoform 2 is required to promote proapoptotic activity. Isoform 2 regulates neuronal survival through the mitochondrial fission and fusion balance. In Rattus norvegicus (Rat), this protein is Serine/threonine-protein phosphatase 2A 55 kDa regulatory subunit B beta isoform (Ppp2r2b).